The primary structure comprises 259 residues: 5'-nucleotidase SurE (259 aa).

A divalent metal cation-binding residues include Asp8, Asp9, Ser40, and Asn92.

Belongs to the SurE nucleotidase family. The cofactor is a divalent metal cation.

The protein resides in the cytoplasm. It carries out the reaction a ribonucleoside 5'-phosphate + H2O = a ribonucleoside + phosphate. In terms of biological role, nucleotidase that shows phosphatase activity on nucleoside 5'-monophosphates. The protein is 5'-nucleotidase SurE of Stenotrophomonas maltophilia (strain K279a).